The sequence spans 173 residues: Photosystem I assembly protein Ycf3 (173 aa).

3 TPR repeats span residues 35–68 (AYIY…EENK), 72–105 (GETL…NPKQ), and 120–153 (GRNA…YPGG).

The protein belongs to the Ycf3 family.

It is found in the cellular thylakoid membrane. Essential for the assembly of the photosystem I (PSI) complex. May act as a chaperone-like factor to guide the assembly of the PSI subunits. The polypeptide is Photosystem I assembly protein Ycf3 (Prochlorococcus marinus (strain MIT 9301)).